The chain runs to 69 residues: UPF0337 protein ECA0631 (69 aa).

This sequence belongs to the UPF0337 (CsbD) family.

The chain is UPF0337 protein ECA0631 from Pectobacterium atrosepticum (strain SCRI 1043 / ATCC BAA-672) (Erwinia carotovora subsp. atroseptica).